Here is a 124-residue protein sequence, read N- to C-terminus: V-type proton ATPase subunit F (124 aa).

It belongs to the V-ATPase F subunit family. V-ATPase is a heteromultimeric enzyme composed of a peripheral catalytic V1 complex (components A to H) attached to an integral membrane V0 proton pore complex (components: a, c, c', c'', d, e, f and VOA1).

The protein resides in the vacuole membrane. Subunit of the V1 complex of vacuolar(H+)-ATPase (V-ATPase), a multisubunit enzyme composed of a peripheral complex (V1) that hydrolyzes ATP and a membrane integral complex (V0) that translocates protons. V-ATPase is responsible for acidifying and maintaining the pH of intracellular compartments. In Neosartorya fischeri (strain ATCC 1020 / DSM 3700 / CBS 544.65 / FGSC A1164 / JCM 1740 / NRRL 181 / WB 181) (Aspergillus fischerianus), this protein is V-type proton ATPase subunit F (vma7).